A 185-amino-acid chain; its full sequence is Ribosome-recycling factor (185 aa).

It belongs to the RRF family.

It localises to the cytoplasm. Responsible for the release of ribosomes from messenger RNA at the termination of protein biosynthesis. May increase the efficiency of translation by recycling ribosomes from one round of translation to another. The sequence is that of Ribosome-recycling factor from Alcanivorax borkumensis (strain ATCC 700651 / DSM 11573 / NCIMB 13689 / SK2).